The primary structure comprises 193 residues: Histone H5 (193 aa).

Residues 1–11 are compositionally biased toward pro residues; it reads TDSPIPAPAPA. 2 disordered regions span residues 1 to 29 and 80 to 193; these read TDSP…HPTY and GVLK…PKKK. Over residues 13-24 the composition is skewed to basic residues; it reads KPKRARAPRKPA. An H15 domain is found at 25-98; that stretch reads SHPTYSEMIA…GASGSFRLAK (74 aa). Positions 104-193 are enriched in basic residues; that stretch reads RSPAGRKKKK…SGARKSPKKK (90 aa).

The protein belongs to the histone H1/H5 family. As to expression, erythroid cells.

The protein localises to the nucleus. The protein resides in the chromosome. In terms of biological role, histone H5 performs the same function as H1, being necessary for the condensation of nucleosome chains into higher order structures, and replaces histone H1 in certain cells. In Anser anser anser (Western greylag goose), this protein is Histone H5.